The chain runs to 332 residues: Small ribosomal subunit biogenesis GTPase RsgA (332 aa).

A CP-type G domain is found at 103-259 (RQQLIAANLD…LIDTPGMREL (157 aa)). GTP contacts are provided by residues 148–151 (TKVD) and 201–209 (GSSGAGKST). The Zn(2+) site is built by C281, C286, H288, and C294.

Belongs to the TRAFAC class YlqF/YawG GTPase family. RsgA subfamily. Monomer. Associates with 30S ribosomal subunit, binds 16S rRNA. It depends on Zn(2+) as a cofactor.

It is found in the cytoplasm. Functionally, one of several proteins that assist in the late maturation steps of the functional core of the 30S ribosomal subunit. Helps release RbfA from mature subunits. May play a role in the assembly of ribosomal proteins into the subunit. Circularly permuted GTPase that catalyzes slow GTP hydrolysis, GTPase activity is stimulated by the 30S ribosomal subunit. The polypeptide is Small ribosomal subunit biogenesis GTPase RsgA (Xylella fastidiosa (strain M23)).